An 875-amino-acid polypeptide reads, in one-letter code: Protein translocase subunit SecA (875 aa).

ATP is bound by residues Gln87, 105 to 109 (GEGKT), and Asp512. Residues Cys860, Cys862, Cys871, and His872 each contribute to the Zn(2+) site.

This sequence belongs to the SecA family. In terms of assembly, monomer and homodimer. Part of the essential Sec protein translocation apparatus which comprises SecA, SecYEG and auxiliary proteins SecDF-YajC and YidC. Zn(2+) serves as cofactor.

The protein localises to the cell inner membrane. It localises to the cytoplasm. It carries out the reaction ATP + H2O + cellular proteinSide 1 = ADP + phosphate + cellular proteinSide 2.. Functionally, part of the Sec protein translocase complex. Interacts with the SecYEG preprotein conducting channel. Has a central role in coupling the hydrolysis of ATP to the transfer of proteins into and across the cell membrane, serving both as a receptor for the preprotein-SecB complex and as an ATP-driven molecular motor driving the stepwise translocation of polypeptide chains across the membrane. In Buchnera aphidicola subsp. Acyrthosiphon pisum (strain 5A), this protein is Protein translocase subunit SecA.